The sequence spans 790 residues: Pentatricopeptide repeat-containing protein OTP51, chloroplastic (790 aa).

The N-terminal 56 residues, 1–56, are a transit peptide targeting the chloroplast; sequence MATTSPCAAPSPSLRCPLALSHPFASPPPPPALRLAGPKLLPGRLAVSPPPGIPAV. PPR repeat units lie at residues 182–216, 217–254, 256–296, 299–333, 334–368, 369–403, 404–438, 439–469, 473–507, and 509–543; these read NFAL…GRVP, AEST…GGYK, RLSL…NLDV, DVYA…GFDE, GIDV…GSDL, PVQA…NIPP, NVAS…DMKH, LMPA…CIAR, NRIL…GMIG, and NTKS…KYDV. A disordered region spans residues 762–790; sequence GSSIGSDGTQDTDTDSDDDMQMSDTERDE. A compositionally biased stretch (acidic residues) spans 771–790; that stretch reads QDTDTDSDDDMQMSDTERDE.

The protein belongs to the PPR family. P subfamily.

Its subcellular location is the plastid. The protein resides in the chloroplast. Its function is as follows. Promotes the splicing of group II introns in chloroplasts. Required for the splicing of intron 2 of plastid ycf3 transcripts, a factor required for the assembly of photosystem I (PSI). Involved in the splicing of atpF, ndhA, petB and rps16 chloroplastic transcripts. Required for the assembly of PSI. The sequence is that of Pentatricopeptide repeat-containing protein OTP51, chloroplastic from Oryza sativa subsp. japonica (Rice).